A 373-amino-acid chain; its full sequence is 3-isopropylmalate dehydrogenase gloI (373 aa).

Substrate contacts are provided by serine 92, arginine 98, and arginine 108. Positions 228, 253, and 257 each coordinate Mg(2+). NADP(+) contacts are provided by residues 294-300 (HGSAPDI) and asparagine 307.

This sequence belongs to the isocitrate and isopropylmalate dehydrogenases family. Homodimer. Requires Mg(2+) as cofactor. The cofactor is Mn(2+).

It catalyses the reaction (2R,3S)-3-isopropylmalate + NAD(+) = 4-methyl-2-oxopentanoate + CO2 + NADH. It functions in the pathway mycotoxin biosynthesis. 3-isopropylmalate dehydrogenase; part of the gene cluster that mediates the biosynthesis of pneumocandins, lipohexapeptides of the echinocandin family that prevent fungal cell wall formation by non-competitive inhibition of beta-1,3-glucan synthase. The 10,12-dimethylmyristoyl side chain is synthesized by the reducing polyketide synthase gloL/GLPKS4. The thioesterase gloN/GLHYD exclusively interacts with gloL/GLPKS4 to maintain turnover of the polyketide side chain. The 10R,12S-dimethylmyristic acid is then transferred to the first thiolation domain of the nonribosomal peptide synthetase gloA/GLNRPS4 by the acyl-AMP ligase gloD/GLligase, followed by its acylation to L-ornithine to trigger elongation of the cyclic hexapeptide. L-ornithine, 4R-hydroxyl-L-proline (generated from L-proline by the dioxygenase gloF/GLOXY2), 3S-hydroxyl-L-homotyrosine (generated by gloG/GLHtyB, gloH/GLHtyA, gloI/GLHtyC, gloJ/GLHtyD and hydroxylated at C-3 by the dioxygenase gloM/GLOXY1), 3R-hydroxyl-L-glutamine (generated from L-glutamine probably by the dioxygenase gloE/GLOXY3) and 3S-hydroxyl-L-proline (generated from L-proline by the dioxygenase gloF/GLOXY2 to yield pneumocandin B0), or 3S-hydroxyl-4S-methyl-L-proline (generated from L-leucine by the dioxygenase gloC/GLOXY4 to yield pneumocandin A0) are sequentially added to the growing chain. The last C domain of gloA/GLNRPS4 is proposed to be responsible for cyclization by condensation to form the peptide bond between L-ornithine and 3S-hydroxyl-4S-methyl-L-proline (for pneumocandin A0) or 3S-hydroxyl-L-proline (for pneumocandin B0). Finally, the subsequent C-4 hydroxylation of 3S-hydroxyl-L-homotyrosine and L-ornithine dihydroxylation at C-4 and C-5 are performed by the cytochrome P450 monooxygenases gloP/GLP450-1 and gloO/GLP450-2, respectively. The sequence is that of 3-isopropylmalate dehydrogenase gloI from Glarea lozoyensis (strain ATCC 20868 / MF5171).